A 256-amino-acid polypeptide reads, in one-letter code: Methylesterase 9 (256 aa).

Ser-78 acts as the Acyl-ester intermediate in catalysis. Active-site charge relay system residues include Asp-206 and His-234.

The protein belongs to the AB hydrolase superfamily. Methylesterase family.

The catalysed reaction is methyl (indol-3-yl)acetate + H2O = (indol-3-yl)acetate + methanol + H(+). It catalyses the reaction methyl (-)-jasmonate + H2O = jasmonate + methanol + H(+). The enzyme catalyses methyl salicylate + H2O = salicylate + methanol + H(+). It functions in the pathway plant hormone biosynthesis. Its pathway is lipid metabolism; oxylipin biosynthesis. Esterase activity is down-regulated by salicylic acid (SA). Methylesterase shown to have carboxylesterase activity, methyl indole-3-acetic acid (MeIAA) esterase activity, methyl salicylate (MeSA) esterase activity and methyl jasmonate (MeJA) esterase activity in vitro. Required to convert methyl salicylate (MeSA) to salicylic acid (SA) as part of the signal transduction pathways that activate systemic acquired resistance in systemic tissue. MeSA is believed to be an inactive form that needs to be demethylated to exert a biological effect. In Arabidopsis thaliana (Mouse-ear cress), this protein is Methylesterase 9.